Here is a 214-residue protein sequence, read N- to C-terminus: Attacin (214 aa).

Residues 1–19 (MSKSVALLLLCACLASGRH) form the signal peptide. A propeptide spanning residues 20-26 (VPTRARR) is cleaved from the precursor.

This sequence belongs to the attacin/sarcotoxin-2 family. In terms of tissue distribution, highest expression in fat body and hemocytes and to a much lesser extent in Malpighian tubules, silk gland and midgut.

The protein resides in the secreted. In terms of biological role, hemolymph antibacterial protein. Has a wide spectrum of activity against both Gram-positive and Gram-negative bacteria. This is Attacin from Bombyx mori (Silk moth).